Reading from the N-terminus, the 456-residue chain is GTPase Der (456 aa).

2 EngA-type G domains span residues 4–169 and 177–352; these read PIVA…PAVE and IKVA…ESHK. GTP-binding positions include 10–17, 57–61, 120–123, 183–190, 230–234, and 295–298; these read GRPNVGKS, DTGGL, NKCE, DTAGI, and NKWD. In terms of domain architecture, KH-like spans 353–438; sequence RRVSTSVINE…PIILLWRSKK (86 aa).

The protein belongs to the TRAFAC class TrmE-Era-EngA-EngB-Septin-like GTPase superfamily. EngA (Der) GTPase family. Associates with the 50S ribosomal subunit.

Its function is as follows. GTPase that plays an essential role in the late steps of ribosome biogenesis. This Nostoc punctiforme (strain ATCC 29133 / PCC 73102) protein is GTPase Der.